The sequence spans 275 residues: Glutamate racemase (275 aa).

Residues 10–11 and 42–43 contribute to the substrate site; these read DS and YG. The active-site Proton donor/acceptor is cysteine 74. 75 to 76 contributes to the substrate binding site; that stretch reads NT. Cysteine 189 acts as the Proton donor/acceptor in catalysis. Residue 190–191 participates in substrate binding; that stretch reads TH.

It belongs to the aspartate/glutamate racemases family.

It catalyses the reaction L-glutamate = D-glutamate. Its pathway is cell wall biogenesis; peptidoglycan biosynthesis. In terms of biological role, provides the (R)-glutamate required for cell wall biosynthesis. This Bartonella tribocorum (strain CIP 105476 / IBS 506) protein is Glutamate racemase.